Reading from the N-terminus, the 272-residue chain is Dermonecrotic toxin LvSicTox-alphaIC1bv (272 aa).

Histidine 5 is a catalytic residue. Mg(2+) is bound by residues glutamate 25 and aspartate 27. The active-site Nucleophile is the histidine 41. Disulfide bonds link cysteine 45–cysteine 51 and cysteine 47–cysteine 189. Aspartate 84 is a Mg(2+) binding site.

This sequence belongs to the arthropod phospholipase D family. Class II subfamily. Mg(2+) is required as a cofactor. Expressed by the venom gland.

It is found in the secreted. The enzyme catalyses an N-(acyl)-sphingosylphosphocholine = an N-(acyl)-sphingosyl-1,3-cyclic phosphate + choline. It carries out the reaction an N-(acyl)-sphingosylphosphoethanolamine = an N-(acyl)-sphingosyl-1,3-cyclic phosphate + ethanolamine. The catalysed reaction is a 1-acyl-sn-glycero-3-phosphocholine = a 1-acyl-sn-glycero-2,3-cyclic phosphate + choline. It catalyses the reaction a 1-acyl-sn-glycero-3-phosphoethanolamine = a 1-acyl-sn-glycero-2,3-cyclic phosphate + ethanolamine. Dermonecrotic toxins cleave the phosphodiester linkage between the phosphate and headgroup of certain phospholipids (sphingolipid and lysolipid substrates), forming an alcohol (often choline) and a cyclic phosphate. This toxin acts on sphingomyelin (SM). It may also act on ceramide phosphoethanolamine (CPE), lysophosphatidylcholine (LPC) and lysophosphatidylethanolamine (LPE), but not on lysophosphatidylserine (LPS), and lysophosphatidylglycerol (LPG). It acts by transphosphatidylation, releasing exclusively cyclic phosphate products as second products. Induces dermonecrosis, hemolysis, increased vascular permeability, edema, inflammatory response, and platelet aggregation. This is Dermonecrotic toxin LvSicTox-alphaIC1bv from Loxosceles variegata (Recluse spider).